We begin with the raw amino-acid sequence, 426 residues long: MNQLRLEPIKKVSGTINIPGSKSISNRALLLATLAEGTTTLTNLLDSDDIRYMLASLKQLGVSYRLSNNNTVCELDGLAGPLNASEAQTLFLGNAGTAMRPLCAALTLGQGDFTLTGEPRMEERPIGDLVDALRQLGAEVSYLKNDGFPPLSISSTGLNGGNVEIAGDLSSQFLTALLMVAPLAKDDVNIQIKGELVSKPYIDITLALMAQFGVKVQNNDYASFVIKAGQRYVSPGKVLVEGDASSASYFLAAGAIQGGEVKVTGVGKLSIQGDVKFADVLQQMGAEIEWGDDYIISRGAKLTAVDLDMNHIPDAAMTIATTALFATGTTHIRNIYNWRIKETDRLAAMATELRKVGAIVDEGHDYISVTPPAELNTAAIDTYSDHRMAMCFSMMAFADCGITINEPECTSKTFPDYFNQFNSLAH.

3-phosphoshikimate contacts are provided by Lys22, Ser23, and Arg27. Lys22 is a phosphoenolpyruvate binding site. Positions 96 and 124 each coordinate phosphoenolpyruvate. 3-phosphoshikimate contacts are provided by Ser170, Ser171, Gln172, Ser198, Asp314, Asn337, and Lys341. Gln172 lines the phosphoenolpyruvate pocket. The active-site Proton acceptor is the Asp314. 3 residues coordinate phosphoenolpyruvate: Arg345, Arg387, and Lys412.

Belongs to the EPSP synthase family. As to quaternary structure, monomer.

The protein resides in the cytoplasm. The enzyme catalyses 3-phosphoshikimate + phosphoenolpyruvate = 5-O-(1-carboxyvinyl)-3-phosphoshikimate + phosphate. The protein operates within metabolic intermediate biosynthesis; chorismate biosynthesis; chorismate from D-erythrose 4-phosphate and phosphoenolpyruvate: step 6/7. Its function is as follows. Catalyzes the transfer of the enolpyruvyl moiety of phosphoenolpyruvate (PEP) to the 5-hydroxyl of shikimate-3-phosphate (S3P) to produce enolpyruvyl shikimate-3-phosphate and inorganic phosphate. The chain is 3-phosphoshikimate 1-carboxyvinyltransferase from Shewanella pealeana (strain ATCC 700345 / ANG-SQ1).